The following is a 500-amino-acid chain: MSFVLAIDQGTTSSRAMVFRSDISIAAVAQQEFPQHFPASGWVEHEPEDIWTSTVMTCRDALEKAGLAAKDIAAIGITNQRETTVVWDRATGQAVHRAIVWQDRRTADICAKLKAEGHEPDVSARTGLIIDPYFSGTKVAWILDHVPGARERAERGELLFGTVDCYLLWRLTGGRVHATDATNASRTLLFNIHTGQWDDTLLKLLRVPRSMLPEVKDSSADFGTTTPDLFGGPIKVAGIAGDQQAATIGQACFTPGMMKSTYGTGCFALLNTGATPVKSNNKLLTTIAYQLNGIRTYALEGSIFVAGSAVQWLRDGLGIIKHAAETGPLADKSDSMQSVYLVPAFVGLGAPYWNPRVRGALFGLTRNTGPAELAHATLESVCYQTYDLWAAMRADWPDASAATIVLRVDGGMTASDWTMQRLADLLDAPVDRPMIQETTALGAAYLAGLNAGVYPEPEKFADNWRLEHRFRPAMSAATRQRKLAGWARAVKGVLASDEGE.

An ADP-binding site is contributed by T11. 3 residues coordinate ATP: T11, T12, and S13. T11 is a sn-glycerol 3-phosphate binding site. R15 lines the ADP pocket. Sn-glycerol 3-phosphate is bound by residues R81, E82, Y133, and D242. Residues R81, E82, Y133, D242, and Q243 each coordinate glycerol. Positions 264 and 307 each coordinate ADP. Positions 264, 307, 311, and 411 each coordinate ATP. ADP is bound at residue G411.

It belongs to the FGGY kinase family.

It catalyses the reaction glycerol + ATP = sn-glycerol 3-phosphate + ADP + H(+). Its pathway is polyol metabolism; glycerol degradation via glycerol kinase pathway; sn-glycerol 3-phosphate from glycerol: step 1/1. Inhibited by fructose 1,6-bisphosphate (FBP). Key enzyme in the regulation of glycerol uptake and metabolism. Catalyzes the phosphorylation of glycerol to yield sn-glycerol 3-phosphate. The sequence is that of Glycerol kinase from Bradyrhizobium sp. (strain ORS 278).